The chain runs to 277 residues: 4-hydroxy-3-methylbut-2-enyl diphosphate reductase (277 aa).

C12 contacts [4Fe-4S] cluster. 2 residues coordinate (2E)-4-hydroxy-3-methylbut-2-enyl diphosphate: H36 and H70. 2 residues coordinate dimethylallyl diphosphate: H36 and H70. Positions 36 and 70 each coordinate isopentenyl diphosphate. Residue C92 participates in [4Fe-4S] cluster binding. H120 contributes to the (2E)-4-hydroxy-3-methylbut-2-enyl diphosphate binding site. Position 120 (H120) interacts with dimethylallyl diphosphate. Position 120 (H120) interacts with isopentenyl diphosphate. The active-site Proton donor is E122. (2E)-4-hydroxy-3-methylbut-2-enyl diphosphate is bound at residue T158. C186 serves as a coordination point for [4Fe-4S] cluster. 3 residues coordinate (2E)-4-hydroxy-3-methylbut-2-enyl diphosphate: S214, N216, and S258. Dimethylallyl diphosphate contacts are provided by S214, N216, and S258. S214, N216, and S258 together coordinate isopentenyl diphosphate.

It belongs to the IspH family. The cofactor is [4Fe-4S] cluster.

The catalysed reaction is isopentenyl diphosphate + 2 oxidized [2Fe-2S]-[ferredoxin] + H2O = (2E)-4-hydroxy-3-methylbut-2-enyl diphosphate + 2 reduced [2Fe-2S]-[ferredoxin] + 2 H(+). The enzyme catalyses dimethylallyl diphosphate + 2 oxidized [2Fe-2S]-[ferredoxin] + H2O = (2E)-4-hydroxy-3-methylbut-2-enyl diphosphate + 2 reduced [2Fe-2S]-[ferredoxin] + 2 H(+). It functions in the pathway isoprenoid biosynthesis; dimethylallyl diphosphate biosynthesis; dimethylallyl diphosphate from (2E)-4-hydroxy-3-methylbutenyl diphosphate: step 1/1. The protein operates within isoprenoid biosynthesis; isopentenyl diphosphate biosynthesis via DXP pathway; isopentenyl diphosphate from 1-deoxy-D-xylulose 5-phosphate: step 6/6. Its function is as follows. Catalyzes the conversion of 1-hydroxy-2-methyl-2-(E)-butenyl 4-diphosphate (HMBPP) into a mixture of isopentenyl diphosphate (IPP) and dimethylallyl diphosphate (DMAPP). Acts in the terminal step of the DOXP/MEP pathway for isoprenoid precursor biosynthesis. This Campylobacter jejuni subsp. doylei (strain ATCC BAA-1458 / RM4099 / 269.97) protein is 4-hydroxy-3-methylbut-2-enyl diphosphate reductase.